We begin with the raw amino-acid sequence, 510 residues long: Flavonoid 3',5'-hydroxylase (510 aa).

Cys-447 lines the heme pocket.

This sequence belongs to the cytochrome P450 family. It depends on heme as a cofactor.

The catalysed reaction is a 3',5'-unsubstituted flavanone + 2 reduced [NADPH--hemoprotein reductase] + 2 O2 = a 3',5'-dihydroxyflavanone + 2 oxidized [NADPH--hemoprotein reductase] + 2 H2O + 2 H(+). It functions in the pathway pigment biosynthesis; anthocyanin biosynthesis. Functionally, catalyzes the 3'5'-hydroxylation of naringenin and eriodictyol to form 5,7,3,'4',5'-pentahydroxyflavanone and 3',5'-hydroxylation of dihydrokaempferol and dihydroquercetin to form dihydromyricetin. The sequence is that of Flavonoid 3',5'-hydroxylase (CYP75A5) from Eustoma exaltatum subsp. russellianum (Bluebells).